The sequence spans 367 residues: Quinolinate synthase (367 aa).

Iminosuccinate contacts are provided by His-64 and Ser-82. Cys-127 is a [4Fe-4S] cluster binding site. Iminosuccinate-binding positions include 153 to 155 (YVN) and Ser-170. Residue Cys-216 coordinates [4Fe-4S] cluster. Iminosuccinate contacts are provided by residues 242–244 (HPE) and Thr-259. Cys-302 contacts [4Fe-4S] cluster.

It belongs to the quinolinate synthase family. Type 2 subfamily. It depends on [4Fe-4S] cluster as a cofactor.

The protein localises to the cytoplasm. The enzyme catalyses iminosuccinate + dihydroxyacetone phosphate = quinolinate + phosphate + 2 H2O + H(+). Its pathway is cofactor biosynthesis; NAD(+) biosynthesis; quinolinate from iminoaspartate: step 1/1. Its function is as follows. Catalyzes the condensation of iminoaspartate with dihydroxyacetone phosphate to form quinolinate. The sequence is that of Quinolinate synthase from Caulobacter vibrioides (strain ATCC 19089 / CIP 103742 / CB 15) (Caulobacter crescentus).